The sequence spans 86 residues: Mu-theraphotoxin-Hhn1d (86 aa).

The signal sequence occupies residues 1–21 (MKASMFLALAGLALLFVVCYA). Positions 22–49 (SESEEKEFSNELLSSVLAVDDNSKGEER) are excised as a propeptide. 3 disulfide bridges follow: Cys-51-Cys-66, Cys-58-Cys-73, and Cys-65-Cys-80. An Isoleucine amide modification is found at Ile-84.

Belongs to the neurotoxin 10 (Hwtx-1) family. 22 (Htx-4) subfamily. In terms of assembly, monomer. Expressed by the venom gland.

It localises to the secreted. In terms of biological role, neurotoxin. Selectively blocks neuronal tetrodotoxin-sensitive voltage-gated sodium channels (Nav). Does not affect tetrodotoxin-resistant voltage-gated sodium channels or calcium channels. The sequence is that of Mu-theraphotoxin-Hhn1d from Cyriopagopus hainanus (Chinese bird spider).